The sequence spans 1026 residues: Leucine-rich repeat and coiled-coil domain-containing protein 1 (1026 aa).

5 LRR repeats span residues 39–60 (SIHAINLHCNNISKISSIDHIW), 61–82 (NLRHLDLSSNQISQIEGLNTLT), 83–104 (KLCTLNLSCNLITRVEGLEALV), 105–126 (NLTKLNLSYNHINDLSGLMPLH), and 131–152 (KLRYIDLHSNYIDSIHHLLQCT). The 43-residue stretch at 170–212 (NPICLIPGYRAIILQTLPQLRILDCKNIFGEPVSLEEINSSHL) folds into the LRRCT domain. The segment at 310 to 338 (DNVPEKDLRPKRDTDITSESDYGNRRECS) is disordered. Positions 312 to 324 (VPEKDLRPKRDTD) are enriched in basic and acidic residues. Residues 428-641 (REMRWKAEQT…DLENEFRIAL (214 aa)) adopt a coiled-coil conformation.

The protein belongs to the LRRCC1 family.

The protein localises to the cytoplasm. Its subcellular location is the cytoskeleton. It localises to the microtubule organizing center. The protein resides in the centrosome. It is found in the centriole. Its function is as follows. Required for the organization of the mitotic spindle. Maintains the structural integrity of centrosomes during mitosis. The protein is Leucine-rich repeat and coiled-coil domain-containing protein 1 (Lrrcc1) of Mus musculus (Mouse).